The primary structure comprises 425 residues: Serine--tRNA ligase (425 aa).

L-serine is bound at residue 233 to 235; it reads TAE. ATP is bound at residue 264–266; that stretch reads RRE. E287 is an L-serine binding site. 351 to 354 provides a ligand contact to ATP; that stretch reads EISS. Residue S387 coordinates L-serine.

The protein belongs to the class-II aminoacyl-tRNA synthetase family. Type-1 seryl-tRNA synthetase subfamily. Homodimer. The tRNA molecule binds across the dimer.

The protein localises to the cytoplasm. The catalysed reaction is tRNA(Ser) + L-serine + ATP = L-seryl-tRNA(Ser) + AMP + diphosphate + H(+). The enzyme catalyses tRNA(Sec) + L-serine + ATP = L-seryl-tRNA(Sec) + AMP + diphosphate + H(+). Its pathway is aminoacyl-tRNA biosynthesis; selenocysteinyl-tRNA(Sec) biosynthesis; L-seryl-tRNA(Sec) from L-serine and tRNA(Sec): step 1/1. Functionally, catalyzes the attachment of serine to tRNA(Ser). Is also able to aminoacylate tRNA(Sec) with serine, to form the misacylated tRNA L-seryl-tRNA(Sec), which will be further converted into selenocysteinyl-tRNA(Sec). The chain is Serine--tRNA ligase from Thermotoga neapolitana (strain ATCC 49049 / DSM 4359 / NBRC 107923 / NS-E).